We begin with the raw amino-acid sequence, 346 residues long: Nicotinate-nucleotide--dimethylbenzimidazole phosphoribosyltransferase (346 aa).

Glutamate 313 functions as the Proton acceptor in the catalytic mechanism.

It belongs to the CobT family.

It carries out the reaction 5,6-dimethylbenzimidazole + nicotinate beta-D-ribonucleotide = alpha-ribazole 5'-phosphate + nicotinate + H(+). Its pathway is nucleoside biosynthesis; alpha-ribazole biosynthesis; alpha-ribazole from 5,6-dimethylbenzimidazole: step 1/2. Catalyzes the synthesis of alpha-ribazole-5'-phosphate from nicotinate mononucleotide (NAMN) and 5,6-dimethylbenzimidazole (DMB). The protein is Nicotinate-nucleotide--dimethylbenzimidazole phosphoribosyltransferase of Parabacteroides distasonis (strain ATCC 8503 / DSM 20701 / CIP 104284 / JCM 5825 / NCTC 11152).